We begin with the raw amino-acid sequence, 148 residues long: Large ribosomal subunit protein bL9 (148 aa).

This sequence belongs to the bacterial ribosomal protein bL9 family.

Its function is as follows. Binds to the 23S rRNA. The sequence is that of Large ribosomal subunit protein bL9 from Bacillus cereus (strain B4264).